A 1168-amino-acid chain; its full sequence is Transcription-repair-coupling factor (1168 aa).

Residues 633-794 (DMQKSRPMDR…MLGVRDLSVI (162 aa)) enclose the Helicase ATP-binding domain. 646–653 (GDVGYGKT) serves as a coordination point for ATP. The DEEQ box motif lies at 747–750 (DEEQ). Residues 808–969 (VLEQNMSFIK…GFKIAMRDLN (162 aa)) form the Helicase C-terminal domain.

This sequence in the N-terminal section; belongs to the UvrB family. It in the C-terminal section; belongs to the helicase family. RecG subfamily.

The protein localises to the cytoplasm. Its function is as follows. Couples transcription and DNA repair by recognizing RNA polymerase (RNAP) stalled at DNA lesions. Mediates ATP-dependent release of RNAP and its truncated transcript from the DNA, and recruitment of nucleotide excision repair machinery to the damaged site. This Staphylococcus aureus (strain MRSA252) protein is Transcription-repair-coupling factor.